The primary structure comprises 63 residues: Large ribosomal subunit protein bL28 (63 aa).

Belongs to the bacterial ribosomal protein bL28 family.

The protein is Large ribosomal subunit protein bL28 of Geobacter sulfurreducens (strain ATCC 51573 / DSM 12127 / PCA).